Reading from the N-terminus, the 230-residue chain is Octanoyltransferase (230 aa).

The BPL/LPL catalytic domain occupies 40–218; that stretch reads PSLDDVLILL…CFAEVFGVEL (179 aa). Substrate contacts are provided by residues 82–89, 149–151, and 162–164; these read RGGEVTYH, AIG, and GFA. The active-site Acyl-thioester intermediate is Cys180.

The protein belongs to the LipB family.

The protein resides in the cytoplasm. The catalysed reaction is octanoyl-[ACP] + L-lysyl-[protein] = N(6)-octanoyl-L-lysyl-[protein] + holo-[ACP] + H(+). It functions in the pathway protein modification; protein lipoylation via endogenous pathway; protein N(6)-(lipoyl)lysine from octanoyl-[acyl-carrier-protein]: step 1/2. Functionally, catalyzes the transfer of endogenously produced octanoic acid from octanoyl-acyl-carrier-protein onto the lipoyl domains of lipoate-dependent enzymes. Lipoyl-ACP can also act as a substrate although octanoyl-ACP is likely to be the physiological substrate. In Nostoc punctiforme (strain ATCC 29133 / PCC 73102), this protein is Octanoyltransferase.